The primary structure comprises 112 residues: Flowering-promoting factor 1-like protein 2 (112 aa).

This sequence belongs to the FPF1 family. In terms of tissue distribution, expressed in leaves and in some parts of the flowers, mainly in the sepals.

Its function is as follows. Modulates the competence to flowering of apical meristems. The chain is Flowering-promoting factor 1-like protein 2 (FLP2) from Arabidopsis thaliana (Mouse-ear cress).